The primary structure comprises 461 residues: Transcription factor phm6 (461 aa).

Residues 18–50 constitute a DNA-binding region (zn(2)-C6 fungal-type); the sequence is CNRCRNHKLKCVVTEAPNGTACCQRCIRAMVPC. 2 disordered regions span residues 55-79 and 256-278; these read RERK…PWET and LQTD…VGAT. A compositionally biased stretch (low complexity) spans 256 to 274; the sequence is LQTDDSSSTQSESSRSRAS.

The protein localises to the nucleus. Its function is as follows. Transcription factor that regulates the expression of the gene cluster that mediates the biosynthesis of the trans-fused decalin-containing tetramic acid phomasetin. The protein is Transcription factor phm6 of Pyrenochaetopsis sp.